The primary structure comprises 78 residues: UPF0270 protein YPO0179/y3960/YP_0178 (78 aa).

The protein belongs to the UPF0270 family.

The chain is UPF0270 protein YPO0179/y3960/YP_0178 from Yersinia pestis.